A 160-amino-acid chain; its full sequence is Cytochrome b6-f complex subunit 4 (160 aa).

Transmembrane regions (helical) follow at residues 36–56 (LLYTFPVVILGTITCCIGLAL), 95–115 (LLGVLSMASVPLGLIFVPFIE), and 127–147 (PIATTVFLVGTVVTIWLGIGA).

This sequence belongs to the cytochrome b family. PetD subfamily. The 4 large subunits of the cytochrome b6-f complex are cytochrome b6, subunit IV (17 kDa polypeptide, petD), cytochrome f and the Rieske protein, while the 4 small subunits are petG, petL, petM and petN. The complex functions as a dimer.

It is found in the plastid. Its subcellular location is the chloroplast thylakoid membrane. In terms of biological role, component of the cytochrome b6-f complex, which mediates electron transfer between photosystem II (PSII) and photosystem I (PSI), cyclic electron flow around PSI, and state transitions. This is Cytochrome b6-f complex subunit 4 from Cyanidioschyzon merolae (strain NIES-3377 / 10D) (Unicellular red alga).